We begin with the raw amino-acid sequence, 853 residues long: DNA topoisomerase 1 (853 aa).

Residues 3 to 136 (KSLVIVESPV…KFRRVVFNEI (134 aa)) form the Toprim domain. Residues Glu-9 and Asp-105 each contribute to the Mg(2+) site. Residues 152–565 (NMNRVYSQQA…SFFDNFSQQL (414 aa)) enclose the Topo IA-type catalytic domain. An interaction with DNA region spans residues 186–191 (SAGRVQ). Tyr-313 acts as the O-(5'-phospho-DNA)-tyrosine intermediate in catalysis. 3 C4-type zinc fingers span residues 589–621 (CSLCNKKMGIKTAVTGVFLSCLGYNSEPNEKRC), 649–676 (CKKCNLVMDVYLINENLKIFICINNPSC), and 699–724 (CEKCKNDMLFKTGRFGNFFMCINDTC).

This sequence belongs to the type IA topoisomerase family. Monomer. It depends on Mg(2+) as a cofactor.

It carries out the reaction ATP-independent breakage of single-stranded DNA, followed by passage and rejoining.. In terms of biological role, releases the supercoiling and torsional tension of DNA, which is introduced during the DNA replication and transcription, by transiently cleaving and rejoining one strand of the DNA duplex. Introduces a single-strand break via transesterification at a target site in duplex DNA. The scissile phosphodiester is attacked by the catalytic tyrosine of the enzyme, resulting in the formation of a DNA-(5'-phosphotyrosyl)-enzyme intermediate and the expulsion of a 3'-OH DNA strand. The free DNA strand then undergoes passage around the unbroken strand, thus removing DNA supercoils. Finally, in the religation step, the DNA 3'-OH attacks the covalent intermediate to expel the active-site tyrosine and restore the DNA phosphodiester backbone. The chain is DNA topoisomerase 1 from Buchnera aphidicola subsp. Schizaphis graminum (strain Sg).